Here is a 488-residue protein sequence, read N- to C-terminus: Cysteine--tRNA ligase (488 aa).

Residue cysteine 29 participates in Zn(2+) binding. Positions 31-41 match the 'HIGH' region motif; sequence ATVQGMPHVGH. Zn(2+) is bound by residues cysteine 227, histidine 252, and glutamate 256. Residues 283 to 287 carry the 'KMSKS' region motif; that stretch reads KMSKS. Lysine 286 provides a ligand contact to ATP.

Belongs to the class-I aminoacyl-tRNA synthetase family. As to quaternary structure, monomer. It depends on Zn(2+) as a cofactor.

It localises to the cytoplasm. The enzyme catalyses tRNA(Cys) + L-cysteine + ATP = L-cysteinyl-tRNA(Cys) + AMP + diphosphate. This chain is Cysteine--tRNA ligase, found in Pseudarthrobacter chlorophenolicus (strain ATCC 700700 / DSM 12829 / CIP 107037 / JCM 12360 / KCTC 9906 / NCIMB 13794 / A6) (Arthrobacter chlorophenolicus).